A 207-amino-acid polypeptide reads, in one-letter code: LexA repressor (207 aa).

The H-T-H motif DNA-binding region spans 28-48 (RAEIAQKLGFKSANAAEEHLK). Residues Ser-124 and Lys-161 each act as for autocatalytic cleavage activity in the active site.

Belongs to the peptidase S24 family. In terms of assembly, homodimer.

It catalyses the reaction Hydrolysis of Ala-|-Gly bond in repressor LexA.. In terms of biological role, represses a number of genes involved in the response to DNA damage (SOS response), including recA and lexA. In the presence of single-stranded DNA, RecA interacts with LexA causing an autocatalytic cleavage which disrupts the DNA-binding part of LexA, leading to derepression of the SOS regulon and eventually DNA repair. The protein is LexA repressor of Aeromonas hydrophila subsp. hydrophila (strain ATCC 7966 / DSM 30187 / BCRC 13018 / CCUG 14551 / JCM 1027 / KCTC 2358 / NCIMB 9240 / NCTC 8049).